We begin with the raw amino-acid sequence, 426 residues long: Serine--tRNA ligase (426 aa).

233–235 (TAE) lines the L-serine pocket. Residue 264 to 266 (RSE) coordinates ATP. Residue Glu287 coordinates L-serine. Residue 351–354 (EISS) coordinates ATP. An L-serine-binding site is contributed by Ser387.

Belongs to the class-II aminoacyl-tRNA synthetase family. Type-1 seryl-tRNA synthetase subfamily. In terms of assembly, homodimer. The tRNA molecule binds across the dimer.

It localises to the cytoplasm. The catalysed reaction is tRNA(Ser) + L-serine + ATP = L-seryl-tRNA(Ser) + AMP + diphosphate + H(+). The enzyme catalyses tRNA(Sec) + L-serine + ATP = L-seryl-tRNA(Sec) + AMP + diphosphate + H(+). The protein operates within aminoacyl-tRNA biosynthesis; selenocysteinyl-tRNA(Sec) biosynthesis; L-seryl-tRNA(Sec) from L-serine and tRNA(Sec): step 1/1. In terms of biological role, catalyzes the attachment of serine to tRNA(Ser). Is also able to aminoacylate tRNA(Sec) with serine, to form the misacylated tRNA L-seryl-tRNA(Sec), which will be further converted into selenocysteinyl-tRNA(Sec). The chain is Serine--tRNA ligase from Pseudomonas putida (strain GB-1).